The primary structure comprises 545 residues: Chaperonin GroEL (545 aa).

Residues 29 to 32 (TMGP), Lys50, 86 to 90 (DGTTT), Gly414, 480 to 482 (NAA), and Asp496 contribute to the ATP site.

The protein belongs to the chaperonin (HSP60) family. In terms of assembly, forms a cylinder of 14 subunits composed of two heptameric rings stacked back-to-back. Interacts with the co-chaperonin GroES.

It localises to the cytoplasm. It carries out the reaction ATP + H2O + a folded polypeptide = ADP + phosphate + an unfolded polypeptide.. Together with its co-chaperonin GroES, plays an essential role in assisting protein folding. The GroEL-GroES system forms a nano-cage that allows encapsulation of the non-native substrate proteins and provides a physical environment optimized to promote and accelerate protein folding. In Malacoplasma penetrans (strain HF-2) (Mycoplasma penetrans), this protein is Chaperonin GroEL.